A 428-amino-acid polypeptide reads, in one-letter code: CinA-like protein (428 aa).

It belongs to the CinA family.

In Endomicrobium trichonymphae, this protein is CinA-like protein.